We begin with the raw amino-acid sequence, 355 residues long: tRNA pseudouridine synthase D (355 aa).

Asp84 functions as the Nucleophile in the catalytic mechanism. The region spanning Gly160 to Leu306 is the TRUD domain.

Belongs to the pseudouridine synthase TruD family.

The catalysed reaction is uridine(13) in tRNA = pseudouridine(13) in tRNA. Functionally, responsible for synthesis of pseudouridine from uracil-13 in transfer RNAs. This Pseudomonas aeruginosa (strain UCBPP-PA14) protein is tRNA pseudouridine synthase D.